The primary structure comprises 64 residues: Small ribosomal subunit protein bS21 (64 aa).

This sequence belongs to the bacterial ribosomal protein bS21 family.

The polypeptide is Small ribosomal subunit protein bS21 (Karelsulcia muelleri (strain GWSS) (Sulcia muelleri)).